A 79-amino-acid chain; its full sequence is uncharacterized protein (79 aa).

A TM2 domain is found at 3–54 (SKKNKIVAALLAFFFGGLGIHKFYLGRVGQGILYILFCWTGIPSIIAFIEFI). 2 consecutive transmembrane segments (helical) span residues 8–28 (IVAA…FYLG) and 37–57 (ILFC…IIFL).

It is found in the cell membrane. This is an uncharacterized protein from Bacillus subtilis (strain 168).